The primary structure comprises 65 residues: Large ribosomal subunit protein uL29 (65 aa).

Belongs to the universal ribosomal protein uL29 family.

The sequence is that of Large ribosomal subunit protein uL29 from Acidithiobacillus ferrooxidans (strain ATCC 23270 / DSM 14882 / CIP 104768 / NCIMB 8455) (Ferrobacillus ferrooxidans (strain ATCC 23270)).